A 288-amino-acid chain; its full sequence is Bifunctional protein FolD 2 (288 aa).

NADP(+) is bound by residues 166 to 168 and serine 191; that span reads GRS.

This sequence belongs to the tetrahydrofolate dehydrogenase/cyclohydrolase family. In terms of assembly, homodimer.

It catalyses the reaction (6R)-5,10-methylene-5,6,7,8-tetrahydrofolate + NADP(+) = (6R)-5,10-methenyltetrahydrofolate + NADPH. It carries out the reaction (6R)-5,10-methenyltetrahydrofolate + H2O = (6R)-10-formyltetrahydrofolate + H(+). Its pathway is one-carbon metabolism; tetrahydrofolate interconversion. In terms of biological role, catalyzes the oxidation of 5,10-methylenetetrahydrofolate to 5,10-methenyltetrahydrofolate and then the hydrolysis of 5,10-methenyltetrahydrofolate to 10-formyltetrahydrofolate. This chain is Bifunctional protein FolD 2, found in Myxococcus xanthus (strain DK1622).